The chain runs to 477 residues: Protoporphyrinogen oxidase (477 aa).

FAD-binding positions include 9–14 (GGGISG), 34–35 (ES), Trp42, 57–60 (GPRG), Val257, Ala449, and 454–456 (VAV).

It belongs to the protoporphyrinogen/coproporphyrinogen oxidase family. Protoporphyrinogen oxidase subfamily. Monomer. Homodimer. FAD serves as cofactor. In terms of tissue distribution, expressed in heart, brain, placenta, lung, liver, skeletal muscle, kidney and pancreas.

It is found in the mitochondrion inner membrane. The catalysed reaction is protoporphyrinogen IX + 3 O2 = protoporphyrin IX + 3 H2O2. Its pathway is porphyrin-containing compound metabolism; protoporphyrin-IX biosynthesis; protoporphyrin-IX from protoporphyrinogen-IX: step 1/1. Functionally, catalyzes the 6-electron oxidation of protoporphyrinogen-IX to form protoporphyrin-IX. In Homo sapiens (Human), this protein is Protoporphyrinogen oxidase (PPOX).